The following is a 445-amino-acid chain: tRNA modification GTPase MnmE (445 aa).

(6S)-5-formyl-5,6,7,8-tetrahydrofolate contacts are provided by arginine 25, glutamate 83, and lysine 121. A TrmE-type G domain is found at 217 to 371 (GVRVVILGPP…LLTLIQEKSR (155 aa)). GTP is bound by residues 227–232 (NAGKST), 246–252 (SEHPGTT), and 271–274 (DTAG). Mg(2+) contacts are provided by serine 231 and threonine 252. Lysine 445 contributes to the (6S)-5-formyl-5,6,7,8-tetrahydrofolate binding site.

The protein belongs to the TRAFAC class TrmE-Era-EngA-EngB-Septin-like GTPase superfamily. TrmE GTPase family. As to quaternary structure, homodimer. Heterotetramer of two MnmE and two MnmG subunits. The cofactor is K(+).

The protein localises to the cytoplasm. Exhibits a very high intrinsic GTPase hydrolysis rate. Involved in the addition of a carboxymethylaminomethyl (cmnm) group at the wobble position (U34) of certain tRNAs, forming tRNA-cmnm(5)s(2)U34. The chain is tRNA modification GTPase MnmE from Anaplasma phagocytophilum (strain HZ).